The chain runs to 222 residues: N-(5'-phosphoribosyl)anthranilate isomerase (222 aa).

The protein belongs to the TrpF family.

The catalysed reaction is N-(5-phospho-beta-D-ribosyl)anthranilate = 1-(2-carboxyphenylamino)-1-deoxy-D-ribulose 5-phosphate. It functions in the pathway amino-acid biosynthesis; L-tryptophan biosynthesis; L-tryptophan from chorismate: step 3/5. The polypeptide is N-(5'-phosphoribosyl)anthranilate isomerase (Rhizobium johnstonii (strain DSM 114642 / LMG 32736 / 3841) (Rhizobium leguminosarum bv. viciae)).